The primary structure comprises 539 residues: GMP synthase [glutamine-hydrolyzing] (539 aa).

The 199-residue stretch at 4–202 (KILILDFGSQ…VLDIAGAKPD (199 aa)) folds into the Glutamine amidotransferase type-1 domain. The Nucleophile role is filled by C81. Residues H176 and E178 contribute to the active site. Residues 203-395 (WIMRDHIEEA…LGLPAEMVYR (193 aa)) form the GMPS ATP-PPase domain. ATP is bound at residue 230–236 (SGGVDSS).

As to quaternary structure, homodimer.

The catalysed reaction is XMP + L-glutamine + ATP + H2O = GMP + L-glutamate + AMP + diphosphate + 2 H(+). It functions in the pathway purine metabolism; GMP biosynthesis; GMP from XMP (L-Gln route): step 1/1. Its function is as follows. Catalyzes the synthesis of GMP from XMP. The protein is GMP synthase [glutamine-hydrolyzing] of Burkholderia pseudomallei (strain 1106a).